The following is a 131-amino-acid chain: Holo-[acyl-carrier-protein] synthase (131 aa).

Mg(2+) contacts are provided by D6 and E55.

It belongs to the P-Pant transferase superfamily. AcpS family. The cofactor is Mg(2+).

The protein resides in the cytoplasm. The catalysed reaction is apo-[ACP] + CoA = holo-[ACP] + adenosine 3',5'-bisphosphate + H(+). In terms of biological role, transfers the 4'-phosphopantetheine moiety from coenzyme A to a Ser of acyl-carrier-protein. The polypeptide is Holo-[acyl-carrier-protein] synthase (Verminephrobacter eiseniae (strain EF01-2)).